Consider the following 775-residue polypeptide: Serine/threonine-protein kinase ppk6 (775 aa).

A phosphoserine mark is found at Ser-132 and Ser-134. The region spanning 503-758 (YTTIKELGIG…IEETLQHHWF (256 aa)) is the Protein kinase domain. Residues 509–517 (LGIGAYGQV) and Lys-533 contribute to the ATP site. The Proton acceptor role is filled by Asp-636.

Belongs to the protein kinase superfamily. Ser/Thr protein kinase family.

The protein localises to the cytoplasm. It is found in the nucleus. The enzyme catalyses L-seryl-[protein] + ATP = O-phospho-L-seryl-[protein] + ADP + H(+). The catalysed reaction is L-threonyl-[protein] + ATP = O-phospho-L-threonyl-[protein] + ADP + H(+). In Schizosaccharomyces pombe (strain 972 / ATCC 24843) (Fission yeast), this protein is Serine/threonine-protein kinase ppk6 (ppk6).